The sequence spans 75 residues: UPF0352 protein VV1166 (75 aa).

The protein belongs to the UPF0352 family.

This is UPF0352 protein VV1166 from Vibrio vulnificus (strain YJ016).